Consider the following 85-residue polypeptide: MAHKKGVGSSRNGRDSDGQRLGCKKFGGEAVKAGNIIYRQHGTKIHPGNNVGLGKDYTLFALIEGVVKFERMGRDRKKVSVYPAN.

A disordered region spans residues 1-21 (MAHKKGVGSSRNGRDSDGQRL).

Belongs to the bacterial ribosomal protein bL27 family.

The protein is Large ribosomal subunit protein bL27 of Geobacter sp. (strain M21).